Reading from the N-terminus, the 1017-residue chain is Protein translocase subunit SecA 1 (1017 aa).

ATP-binding positions include Q143, 161 to 165 (GEGKT), and D661. Positions 978-999 (GLNDDDEPLPAQPITTEQKPGR) are disordered. Zn(2+) contacts are provided by C1003, C1005, C1014, and C1015.

Belongs to the SecA family. As to quaternary structure, monomer and homodimer. Part of the essential Sec protein translocation apparatus which comprises SecA, SecYEG and auxiliary proteins SecDF. Other proteins may also be involved. Zn(2+) serves as cofactor.

The protein localises to the cell inner membrane. It localises to the cytoplasm. It carries out the reaction ATP + H2O + cellular proteinSide 1 = ADP + phosphate + cellular proteinSide 2.. Its function is as follows. Part of the Sec protein translocase complex. Interacts with the SecYEG preprotein conducting channel. Has a central role in coupling the hydrolysis of ATP to the transfer of proteins into and across the cell membrane, serving as an ATP-driven molecular motor driving the stepwise translocation of polypeptide chains across the membrane. The protein is Protein translocase subunit SecA 1 of Chlorobium chlorochromatii (strain CaD3).